The sequence spans 192 residues: Thiamine transporter ThiT (192 aa).

Helical transmembrane passes span 10 to 30 (LIEIAIMTAAAVILDIVSGMF), 31 to 51 (LSMPQGGSVSIMMIPIFLISF), 57 to 77 (AGLTTGLLTGLVQIAIGNLFA), 81 to 101 (VQLLLDYIVAFAAIGISGCFA), 123 to 143 (AVFIGSLLRYAAHVISGAVFF), and 164 to 184 (YMVPSFIICAIVLCLLFMTAP).

Belongs to the vitamin uptake transporter (VUT/ECF) (TC 2.A.88) family. Thiamine transporter subfamily. In terms of assembly, forms a stable energy-coupling factor (ECF) transporter complex composed of a membrane-embedded substrate-binding protein (S component), two ATP-binding proteins (A components) and a transmembrane protein (T component).

Its subcellular location is the cell membrane. Its function is as follows. Probably a thiamine-binding protein that interacts with the energy-coupling factor (ECF) ABC-transporter complex. Unlike classic ABC transporters this ECF transporter provides the energy necessary to transport a number of different substrates. The substrates themselves are bound by transmembrane, not extracytoplasmic soluble proteins. The polypeptide is Thiamine transporter ThiT (thiT) (Bacillus subtilis (strain 168)).